The primary structure comprises 319 residues: Major intracellular serine protease (319 aa).

Residues 1-17 (MNGEIRLIPYVTNEQIM) constitute a propeptide that is removed on maturation. The Peptidase S8 domain maps to 23 to 307 (PEGIKVIKAP…FLYLTAPDEL (285 aa)). Active-site charge relay system residues include Asp50, His87, and Ser246.

Belongs to the peptidase S8 family. Homodimer.

It localises to the cytoplasm. Major intracellular protease produced by Bacillus subtilis. In Bacillus subtilis (strain 168), this protein is Major intracellular serine protease (isp).